A 117-amino-acid polypeptide reads, in one-letter code: Large ribosomal subunit protein bL19 (117 aa).

Belongs to the bacterial ribosomal protein bL19 family.

Its function is as follows. This protein is located at the 30S-50S ribosomal subunit interface and may play a role in the structure and function of the aminoacyl-tRNA binding site. This is Large ribosomal subunit protein bL19 from Vibrio campbellii (strain ATCC BAA-1116).